The chain runs to 190 residues: Copper-binding lipoprotein NosL (190 aa).

The N-terminal stretch at 1 to 23 is a signal peptide; sequence MNALHRIGAGTLLAVLLAFGLTG. C24 carries N-palmitoyl cysteine lipidation. C24 carries the S-diacylglycerol cysteine lipid modification. The tract at residues 170–190 is disordered; that stretch reads MQHGGMHDHAPNGAHNAHAGH. Residues 180-190 show a composition bias toward low complexity; it reads PNGAHNAHAGH.

Belongs to the NosL family. As to quaternary structure, monomer.

It localises to the cell membrane. Its function is as follows. May act as a metallochaperone involved in nitrous oxide reductase assembly. Specifically binds Cu(+). This is Copper-binding lipoprotein NosL from Stutzerimonas stutzeri (Pseudomonas stutzeri).